We begin with the raw amino-acid sequence, 204 residues long: Peptide deformylase (204 aa).

Fe cation is bound by residues C131 and H174. Residue E175 is part of the active site. H178 contacts Fe cation.

This sequence belongs to the polypeptide deformylase family. Fe(2+) serves as cofactor.

The enzyme catalyses N-terminal N-formyl-L-methionyl-[peptide] + H2O = N-terminal L-methionyl-[peptide] + formate. Its function is as follows. Removes the formyl group from the N-terminal Met of newly synthesized proteins. Requires at least a dipeptide for an efficient rate of reaction. N-terminal L-methionine is a prerequisite for activity but the enzyme has broad specificity at other positions. The sequence is that of Peptide deformylase from Streptococcus equi subsp. zooepidemicus (strain H70).